The chain runs to 144 residues: Large ribosomal subunit protein uL15 (144 aa).

A disordered region spans residues 1-57; it reads MLLNTLSPAAGSKHAPKRLGRGVGSGLGKTGGRGHKGQKSRSGGKVRPGFEGGQMPL. Positions 21 to 31 are enriched in gly residues; it reads RGVGSGLGKTG. Residues 32-44 are compositionally biased toward basic residues; that stretch reads GRGHKGQKSRSGG.

Belongs to the universal ribosomal protein uL15 family. Part of the 50S ribosomal subunit.

Its function is as follows. Binds to the 23S rRNA. The protein is Large ribosomal subunit protein uL15 of Vibrio cholerae serotype O1 (strain ATCC 39315 / El Tor Inaba N16961).